The following is a 716-amino-acid chain: Exocyst complex component 8 (716 aa).

S15 is modified (phosphoserine). The segment at 129–150 is disordered; it reads GFLPGPAGVPREGSGTGEEGKQ. A PH domain is found at 173-273; that stretch reads YLVYNGDLVE…WLEVLEETKR (101 aa). Basic and acidic residues predominate over residues 275–284; the sequence is LSDKRRREQE. The tract at residues 275 to 319 is disordered; that stretch reads LSDKRRREQEEAAAPRAPPPVTSKGSNPFEDEDDEELATPEAEEE. Residues 303-319 are compositionally biased toward acidic residues; sequence FEDEDDEELATPEAEEE. Residue T313 is modified to Phosphothreonine.

The protein belongs to the EXO84 family. In terms of assembly, the exocyst complex is composed of EXOC1, EXOC2, EXOC3, EXOC4, EXOC5, EXOC6, EXOC7 and EXOC8. Interacts (via PH domain) with GTP-bound RALA and RALB. Interacts with SH3BP1; required for the localization of both SH3BP1 and the exocyst to the leading edge of migrating cells.

The protein resides in the cytoplasm. It localises to the perinuclear region. It is found in the cell projection. The protein localises to the growth cone. Component of the exocyst complex involved in the docking of exocytic vesicles with fusion sites on the plasma membrane. In Mus musculus (Mouse), this protein is Exocyst complex component 8 (Exoc8).